The sequence spans 360 residues: DNA replication and repair protein RecF (360 aa).

30-37 (GQNGSGKT) contacts ATP.

The protein belongs to the RecF family.

The protein localises to the cytoplasm. The RecF protein is involved in DNA metabolism; it is required for DNA replication and normal SOS inducibility. RecF binds preferentially to single-stranded, linear DNA. It also seems to bind ATP. The polypeptide is DNA replication and repair protein RecF (Shewanella baltica (strain OS185)).